The chain runs to 730 residues: Phosphoribosylformylglycinamidine synthase subunit PurL (730 aa).

Residue His44 is part of the active site. 2 residues coordinate ATP: Tyr47 and Lys86. Position 88 (Glu88) interacts with Mg(2+). Residues 89-92 and Arg111 contribute to the substrate site; that span reads SHNH. His90 (proton acceptor) is an active-site residue. Asp112 lines the Mg(2+) pocket. Gln235 contributes to the substrate binding site. Asp263 contributes to the Mg(2+) binding site. 307–309 contacts substrate; sequence ESQ. ATP is bound by residues Asn489 and Gly526. Asn527 is a Mg(2+) binding site. Ser529 provides a ligand contact to substrate.

This sequence belongs to the FGAMS family. As to quaternary structure, monomer. Part of the FGAM synthase complex composed of 1 PurL, 1 PurQ and 2 PurS subunits.

It localises to the cytoplasm. It carries out the reaction N(2)-formyl-N(1)-(5-phospho-beta-D-ribosyl)glycinamide + L-glutamine + ATP + H2O = 2-formamido-N(1)-(5-O-phospho-beta-D-ribosyl)acetamidine + L-glutamate + ADP + phosphate + H(+). It functions in the pathway purine metabolism; IMP biosynthesis via de novo pathway; 5-amino-1-(5-phospho-D-ribosyl)imidazole from N(2)-formyl-N(1)-(5-phospho-D-ribosyl)glycinamide: step 1/2. Functionally, part of the phosphoribosylformylglycinamidine synthase complex involved in the purines biosynthetic pathway. Catalyzes the ATP-dependent conversion of formylglycinamide ribonucleotide (FGAR) and glutamine to yield formylglycinamidine ribonucleotide (FGAM) and glutamate. The FGAM synthase complex is composed of three subunits. PurQ produces an ammonia molecule by converting glutamine to glutamate. PurL transfers the ammonia molecule to FGAR to form FGAM in an ATP-dependent manner. PurS interacts with PurQ and PurL and is thought to assist in the transfer of the ammonia molecule from PurQ to PurL. The protein is Phosphoribosylformylglycinamidine synthase subunit PurL of Pelagibacter ubique (strain HTCC1062).